Here is a 90-residue protein sequence, read N- to C-terminus: NELL2-interacting cell ontogeny regulator 1 (90 aa).

The first 26 residues, 1–26 (MVSSGYLQAVMLLLAVQLLCFRPSDA), serve as a signal peptide directing secretion.

Belongs to the NICOL family.

It localises to the secreted. MRNA-binding protein which interacts with a range of target mRNAs and may promote extracellular matrix production. In Salmo salar (Atlantic salmon), this protein is NELL2-interacting cell ontogeny regulator 1.